The following is a 396-amino-acid chain: NADH-quinone oxidoreductase subunit D (396 aa).

It belongs to the complex I 49 kDa subunit family. In terms of assembly, NDH-1 is composed of 14 different subunits. Subunits NuoB, C, D, E, F, and G constitute the peripheral sector of the complex.

The protein resides in the cell inner membrane. It carries out the reaction a quinone + NADH + 5 H(+)(in) = a quinol + NAD(+) + 4 H(+)(out). Functionally, NDH-1 shuttles electrons from NADH, via FMN and iron-sulfur (Fe-S) centers, to quinones in the respiratory chain. The immediate electron acceptor for the enzyme in this species is believed to be ubiquinone. Couples the redox reaction to proton translocation (for every two electrons transferred, four hydrogen ions are translocated across the cytoplasmic membrane), and thus conserves the redox energy in a proton gradient. In Brucella melitensis biotype 1 (strain ATCC 23456 / CCUG 17765 / NCTC 10094 / 16M), this protein is NADH-quinone oxidoreductase subunit D.